Reading from the N-terminus, the 421-residue chain is DUF724 domain-containing protein 8 (421 aa).

Composition is skewed to polar residues over residues 149-165 (TQGS…NANE) and 199-213 (PRNQ…TLEN). A disordered region spans residues 149 to 229 (TQGSGDKTGD…NRKRKREENL (81 aa)). Residues 246–420 (VLPFEKKLRI…LEFLATASAP (175 aa)) enclose the DUF724 domain. A coiled-coil region spans residues 361-397 (EKVTAEKESVKAENKRKILELQRLNEEMDKEIAQSKS).

As to expression, expressed in leaves and flowers, and at lower levels in roots, stems and siliques.

The protein resides in the nucleus. May be involved in the polar growth of plant cells via transportation of RNAs. This Arabidopsis thaliana (Mouse-ear cress) protein is DUF724 domain-containing protein 8.